The following is a 533-amino-acid chain: D-3-phosphoglycerate dehydrogenase (533 aa).

At Ala2 the chain carries N-acetylalanine. Ser14 bears the Phosphoserine mark. Lys58 carries the N6-acetyllysine modification. NAD(+) contacts are provided by residues Thr78, 155-156 (RI), Asp175, Thr207, 234-236 (CAR), and Asp260. At Thr78 the chain carries Phosphothreonine. Residue Arg236 is part of the active site. The active site involves Glu265. His283 serves as the catalytic Proton donor. NAD(+) is bound at residue 283-286 (HLGA).

This sequence belongs to the D-isomer specific 2-hydroxyacid dehydrogenase family. In terms of assembly, homotetramer.

It catalyses the reaction (2R)-3-phosphoglycerate + NAD(+) = 3-phosphooxypyruvate + NADH + H(+). The enzyme catalyses (R)-2-hydroxyglutarate + NAD(+) = 2-oxoglutarate + NADH + H(+). The catalysed reaction is (S)-malate + NAD(+) = oxaloacetate + NADH + H(+). The protein operates within amino-acid biosynthesis; L-serine biosynthesis; L-serine from 3-phospho-D-glycerate: step 1/3. Functionally, catalyzes the reversible oxidation of 3-phospho-D-glycerate to 3-phosphonooxypyruvate, the first step of the phosphorylated L-serine biosynthesis pathway. Also catalyzes the reversible oxidation of 2-hydroxyglutarate to 2-oxoglutarate and the reversible oxidation of (S)-malate to oxaloacetate. The polypeptide is D-3-phosphoglycerate dehydrogenase (PHGDH) (Sus scrofa (Pig)).